Consider the following 268-residue polypeptide: Ribosomal RNA large subunit methyltransferase E (268 aa).

The interval 1-60 (MKPPRSRSGSSKDTGPKRIPGKALKSASNPGENDATLDSATARTARNKTVSLRTARGRTT) is disordered. Polar residues predominate over residues 26 to 52 (SASNPGENDATLDSATARTARNKTVSL). Residues glycine 115, tryptophan 117, aspartate 133, aspartate 149, and aspartate 173 each contribute to the S-adenosyl-L-methionine site. The active-site Proton acceptor is lysine 213.

Belongs to the class I-like SAM-binding methyltransferase superfamily. RNA methyltransferase RlmE family.

The protein localises to the cytoplasm. It catalyses the reaction uridine(2552) in 23S rRNA + S-adenosyl-L-methionine = 2'-O-methyluridine(2552) in 23S rRNA + S-adenosyl-L-homocysteine + H(+). Functionally, specifically methylates the uridine in position 2552 of 23S rRNA at the 2'-O position of the ribose in the fully assembled 50S ribosomal subunit. This Gluconobacter oxydans (strain 621H) (Gluconobacter suboxydans) protein is Ribosomal RNA large subunit methyltransferase E.